Reading from the N-terminus, the 816-residue chain is Protein hunchback (816 aa).

Disordered regions lie at residues 33–92 (LSHH…QPMD), 129–151 (QQHF…GGFN), 165–185 (YYGG…PTAV), and 197–229 (ALTP…LMSN). Low complexity-rich tracts occupy residues 49 to 60 (SNSNSGASSPRQ), 79 to 89 (QQQQQQQQQQQ), and 129 to 139 (QQHFQAAQHQQ). Thr-199 is subject to Phosphothreonine. Ser-209, Ser-228, Ser-230, and Ser-231 each carry phosphoserine. Over residues 219–229 (EPEKEHDLMSN) the composition is skewed to basic and acidic residues. 4 consecutive C2H2-type zinc fingers follow at residues 261-283 (YKCK…TRTH), 290-312 (LQCA…IRKH), 318-340 (FQCD…RKSH), and 346-364 (YRCA…FKLH). 3 disordered regions span residues 387–427 (VIDV…QQQQ), 536–612 (LQQQ…QLPH), and 679–734 (GSSA…SNPT). 2 stretches are compositionally biased toward low complexity: residues 399–427 (SKSF…QQQQ) and 536–560 (LQQQ…QQQQ). Over residues 567-578 (NEEDEEEEEHED) the composition is skewed to acidic residues. Ser-584 and Ser-587 each carry phosphoserine. The span at 712 to 734 (SASSTASSSGNSSNASSSTSNPT) shows a compositional bias: low complexity. C2H2-type zinc fingers lie at residues 763–785 (YECK…MGYH) and 791–815 (FKCN…RNAH).

Belongs to the hunchback C2H2-type zinc-finger protein family.

The protein resides in the nucleus. Gap class segmentation protein that controls development of head structures. The protein is Protein hunchback of Drosophila virilis (Fruit fly).